Consider the following 151-residue polypeptide: 3-dehydroquinate dehydratase (151 aa).

Tyr24 acts as the Proton acceptor in catalysis. Substrate is bound by residues Asn76, His82, and Asp89. The Proton donor role is filled by His102. Substrate contacts are provided by residues 103 to 104 (LS) and Arg113.

Belongs to the type-II 3-dehydroquinase family. Homododecamer.

The enzyme catalyses 3-dehydroquinate = 3-dehydroshikimate + H2O. The protein operates within metabolic intermediate biosynthesis; chorismate biosynthesis; chorismate from D-erythrose 4-phosphate and phosphoenolpyruvate: step 3/7. Catalyzes a trans-dehydration via an enolate intermediate. The sequence is that of 3-dehydroquinate dehydratase from Acinetobacter baumannii (strain AB307-0294).